Here is a 432-residue protein sequence, read N- to C-terminus: Putative D-alanyl-D-alanine carboxypeptidase (432 aa).

Residues 7 to 25 (ATVLLTFSLSAFAVEYPVL) traverse the membrane as a helical; Signal-anchor segment.

It belongs to the peptidase S12 family. YfeW subfamily.

Its subcellular location is the cell inner membrane. It catalyses the reaction Preferential cleavage: (Ac)2-L-Lys-D-Ala-|-D-Ala. Also transpeptidation of peptidyl-alanyl moieties that are N-acyl substituents of D-alanine.. This is Putative D-alanyl-D-alanine carboxypeptidase from Salmonella paratyphi A (strain ATCC 9150 / SARB42).